Reading from the N-terminus, the 574-residue chain is Sorting nexin-33 (574 aa).

In terms of domain architecture, SH3 spans 1–61; the sequence is MALKGRALYD…PASYVEIVRS (61 aa). Residues 68 to 119 are disordered; sequence ADYSSSPAGSPGAQVSLYNSPSVASPARSGGGSGFLSNQGSFEEDDDDDWDD. Phosphoserine is present on residues Ser-77 and Ser-92. The span at 109–119 shows a compositional bias: acidic residues; that stretch reads FEEDDDDDWDD. A PX domain is found at 230-340; it reads FACSVEDPTK…HFLSCLDDKQ (111 aa). The 204-residue stretch at 371-574 folds into the BAR domain; that stretch reads LQDVEDRVDT…EKTLRMYDNL (204 aa).

It belongs to the sorting nexin family. In terms of assembly, homodimer (via BAR domain). Interacts with ADAM15. Interacts with FASLG. Interacts (via SH3 domain) with DNM1 and DNM2. Interacts with WASL. Interacts with FCHSD1 (via the F-BAR domain). Post-translationally, phosphorylated. As to expression, detected in heart and pancreas.

Its subcellular location is the cytoplasm. It localises to the cytosol. It is found in the membrane. The protein resides in the cytoplasmic vesicle membrane. Its function is as follows. Plays a role in the reorganization of the cytoskeleton, endocytosis and cellular vesicle trafficking via its interactions with membranes, WASL, DNM1 and DNM2. Acts both during interphase and at the end of mitotic cell divisions. Required for efficient progress through mitosis and cytokinesis. Required for normal formation of the cleavage furrow at the end of mitosis. Modulates endocytosis of cell-surface proteins, such as APP and PRNP; this then modulates the secretion of APP and PRNP peptides. Promotes membrane tubulation (in vitro). May promote the formation of macropinosomes. The chain is Sorting nexin-33 (SNX33) from Homo sapiens (Human).